The following is a 475-amino-acid chain: Ankyrin repeat, SAM and basic leucine zipper domain-containing protein 1 (475 aa).

Phosphoserine is present on residues S17, S18, and S20. 6 ANK repeats span residues 45–74, 78–107, 110–144, 148–177, 181–210, and 214–243; these read EKNE…SVDT, YGWT…NASF, DKQT…DPNM, RLMT…DVNA, NGYT…NKMI, and DGKT…PLEG. The 63-residue stretch at 272–334 folds into the SAM domain; sequence SYTAFGDLEI…KILAALKELE (63 aa).

As to quaternary structure, interacts with DDX4, PIWIL1, RANBP9 and TDRD1.

It is found in the cytoplasm. Plays a central role during spermatogenesis by repressing transposable elements and preventing their mobilization, which is essential for the germline integrity. Acts via the piRNA metabolic process, which mediates the repression of transposable elements during meiosis by forming complexes composed of piRNAs and Piwi proteins and governs the methylation and subsequent repression of transposons. Its association with pi-bodies suggests a participation in the primary piRNAs metabolic process. Required prior to the pachytene stage to facilitate the production of multiple types of piRNAs, including those associated with repeats involved in the regulation of retrotransposons. May act by mediating protein-protein interactions during germ cell maturation. The sequence is that of Ankyrin repeat, SAM and basic leucine zipper domain-containing protein 1 (ASZ1) from Atelerix albiventris (Middle-African hedgehog).